Reading from the N-terminus, the 126-residue chain is MQTTTQVKTPVVGKHVYGELYGVDEELLRDQEKLRKIVIEAAHIAKMHLVEVNSWKFKGGDKEGVSVIALVLESHIAIHTWPTYNYATVDVYTCGEHSDPMAAFRYIVSQLAPKRFTVNYSDRSYR.

Ser74 acts as the Schiff-base intermediate with substrate; via pyruvic acid in catalysis. Ser74 carries the pyruvic acid (Ser); by autocatalysis modification. The active-site Proton acceptor; for processing activity is the His79. Cys94 acts as the Proton donor; for catalytic activity in catalysis.

The protein belongs to the prokaryotic AdoMetDC family. Type 1 subfamily. As to quaternary structure, heterooctamer of four alpha and four beta chains arranged as a tetramer of alpha/beta heterodimers. It depends on pyruvate as a cofactor. Is synthesized initially as an inactive proenzyme. Formation of the active enzyme involves a self-maturation process in which the active site pyruvoyl group is generated from an internal serine residue via an autocatalytic post-translational modification. Two non-identical subunits are generated from the proenzyme in this reaction, and the pyruvate is formed at the N-terminus of the alpha chain, which is derived from the carboxyl end of the proenzyme. The post-translation cleavage follows an unusual pathway, termed non-hydrolytic serinolysis, in which the side chain hydroxyl group of the serine supplies its oxygen atom to form the C-terminus of the beta chain, while the remainder of the serine residue undergoes an oxidative deamination to produce ammonia and the pyruvoyl group blocking the N-terminus of the alpha chain.

It carries out the reaction L-arginine + H(+) = agmatine + CO2. It functions in the pathway amine and polyamine biosynthesis; agmatine biosynthesis; agmatine from L-arginine: step 1/1. Its function is as follows. Specifically catalyzes the decarboxylation of L-arginine to agmatine. Has no S-adenosylmethionine decarboxylase (AdoMetDC) activity. The protein is Arginine decarboxylase proenzyme of Pyrobaculum neutrophilum (strain DSM 2338 / JCM 9278 / NBRC 100436 / V24Sta) (Thermoproteus neutrophilus).